The chain runs to 3418 residues: Breast cancer type 2 susceptibility protein (3418 aa).

The interaction with PALB2 stretch occupies residues 1 to 40 (MPIGSKERPTFFEIFKTRCNKADLGPISLNWFEELSSEAP). Residues 37-68 (SEAPPYNSEPAEESEHKNNNYEPNLFKTPQRK) are disordered. At S70 the chain carries Phosphoserine. The tract at residues 358 to 381 (VEPNDTDPLDSNVANQKPFESGSD) is disordered. 3 positions are modified to phosphoserine: S445, S492, and S755. The segment at 639–1000 (LHSSVKRSCS…NKWAGLLGPI (362 aa)) is interaction with NPM1. BRCA2 repeat units lie at residues 1002–1036 (NHSF…DIEE), 1212–1246 (NEVG…DIEN), 1421–1455 (FETS…QKPE), 1517–1551 (KEPT…EKEQ), 1664–1698 (IENS…EGIF), and 1837–1871 (FEVG…DSFS). Residues 1003–2082 (HSFGGSFRTA…LHKVKGVLEE (1080 aa)) form an interaction with RAD51 region. Positions 1338 to 1781 (GSDSSKNDTV…IEPVLKNVED (444 aa)) are interaction with POLH. The interval 1410-1595 (TATKTEQNIK…TAAPKCKEMQ (186 aa)) is required for stimulation of POLH DNA polymerization activity. The residue at position 1970 (S1970) is a Phosphoserine. The stretch at 1971–2005 (SANTCGIFSTASGKSVQVSDASLQNARQVFSEIED) is one BRCA2 7 repeat. Residue T2035 is modified to Phosphothreonine. One copy of the BRCA2 8 repeat lies at 2051-2085 (NSSAFSGFSTASGKQVSILESSLHKVKGVLEEFDL). Position 2095 is a phosphoserine (S2095). Residues 2270–2337 (GKRRGEPLIL…EPITCVPFRT (68 aa)) form an interaction with HSF2BP region. The interval 2350–2545 (TAPGQEFLSK…SHKQLYTYGV (196 aa)) is interaction with FANCD2. Residues 2430–2450 (ENRQKQNIDGHGSDDSKNKIN) form a disordered region. Positions 2481–2832 (ITSLQNARDI…QRAYPIQWME (352 aa)) are interaction with SEM1. A Nuclear export signal; masked by interaction with SEM1 motif is present at residues 2682–2698 (AAKTLVLCVSDIISLSA). S3291 is subject to Phosphoserine; by CDK1 and CDK2. S3319 carries the phosphoserine modification. At T3387 the chain carries Phosphothreonine; by CHEK1 and CHEK2. The disordered stretch occupies residues 3393 to 3418 (EQESSQASTEECEKNKQDTITTKKYI).

Monomer and dimer. Interacts with RAD51; regulates RAD51 recruitment and function at sites of DNA repair. Interacts with WDR16, USP11, DMC1, ROCK2 and NPM1. Interacts with SEM1; the interaction masks a nuclear export signal in BRCA2. Interacts with both nonubiquitinated and monoubiquitinated FANCD2; this complex also includes XRCC3 and phosphorylated FANCG. Part of a BRCA complex containing BRCA1, BRCA2 and PALB2. Component of the homologous recombination repair (HR) complex composed of ERCC5/XPG, BRCA2, PALB2, DSS1 and RAD51. Within the complex, interacts with ERCC5/XPG and PALB2. Interacts directly with PALB2 which may serve as a scaffold for a HR complex containing PALB2, BRCA2, RAD51C, RAD51 and XRCC3. Interacts with BRCA1 only in the presence of PALB2 which serves as the bridging protein. Interacts with POLH; the interaction is direct. Interacts with the TREX-2 complex subunits PCID2 and SEM1. Interacts with HSF2BP and BRME1; the interaction with HSF2BP is direct and allows the formation of a ternary complex. The complex BRME1:HSF2BP:BRCA2 interacts with SPATA22, MEIOB and RAD51. In terms of processing, phosphorylated by ATM upon irradiation-induced DNA damage. Phosphorylation by CHEK1 and CHEK2 regulates interaction with RAD51. Phosphorylation at Ser-3291 by CDK1 and CDK2 is low in S phase when recombination is active, but increases as cells progress towards mitosis; this phosphorylation prevents homologous recombination-dependent repair during S phase and G2 by inhibiting RAD51 binding. Ubiquitinated in the absence of DNA damage; this does not lead to proteasomal degradation. In contrast, ubiquitination in response to DNA damage leads to proteasomal degradation. As to expression, highest levels of expression in breast and thymus, with slightly lower levels in lung, ovary and spleen.

The protein resides in the nucleus. It localises to the cytoplasm. Its subcellular location is the cytoskeleton. The protein localises to the microtubule organizing center. It is found in the centrosome. Involved in double-strand break repair and/or homologous recombination. Binds RAD51 and potentiates recombinational DNA repair by promoting assembly of RAD51 onto single-stranded DNA (ssDNA). Acts by targeting RAD51 to ssDNA over double-stranded DNA, enabling RAD51 to displace replication protein-A (RPA) from ssDNA and stabilizing RAD51-ssDNA filaments by blocking ATP hydrolysis. Part of a PALB2-scaffolded HR complex containing RAD51C and which is thought to play a role in DNA repair by HR. May participate in S phase checkpoint activation. Binds selectively to ssDNA, and to ssDNA in tailed duplexes and replication fork structures. May play a role in the extension step after strand invasion at replication-dependent DNA double-strand breaks; together with PALB2 is involved in both POLH localization at collapsed replication forks and DNA polymerization activity. In concert with NPM1, regulates centrosome duplication. Interacts with the TREX-2 complex (transcription and export complex 2) subunits PCID2 and SEM1, and is required to prevent R-loop-associated DNA damage and thus transcription-associated genomic instability. Silencing of BRCA2 promotes R-loop accumulation at actively transcribed genes in replicating and non-replicating cells, suggesting that BRCA2 mediates the control of R-loop associated genomic instability, independently of its known role in homologous recombination. This Homo sapiens (Human) protein is Breast cancer type 2 susceptibility protein.